Reading from the N-terminus, the 723-residue chain is Probable G-protein coupled receptor 149 (723 aa).

Topologically, residues 1–31 are extracellular; the sequence is MSVMPSNLSLNGTSFFAENHSIMDKPNEQRT. Asn-7, Asn-11, and Asn-19 each carry an N-linked (GlcNAc...) asparagine glycan. A helical membrane pass occupies residues 32–52; it reads LNVFLFCSTFIIAFTVLLGSI. At 53–69 the chain is on the cytoplasmic side; the sequence is YSLVSLLKLQNKSTISM. The helical transmembrane segment at 70–90 threads the bilayer; that stretch reads IVTSLSIDDLISIVPVIIFML. The Extracellular portion of the chain corresponds to 91 to 106; the sequence is TQWSSDALPQPLCTTS. Cys-103 and Cys-181 form a disulfide bridge. The chain crosses the membrane as a helical span at residues 107–127; it reads ALIYLFQGISSNLKGSLIVSY. Residues 128–148 are Cytoplasmic-facing; that stretch reads NFYSINKTETMNCSASKRRVS. Residues 149–169 form a helical membrane-spanning segment; that stretch reads MVWAILSIWIVSLLICILPLC. Residues 170–188 are Extracellular-facing; that stretch reads GWGKYIPTTWGCFTDHASS. A helical transmembrane segment spans residues 189–209; sequence YILFLFIVYSLCFCLLTVLSV. At 210–306 the chain is on the cytoplasmic side; it reads PLTYQLLCSD…SFTVGFAQKR (97 aa). The helical transmembrane segment at 307–327 threads the bilayer; that stretch reads FSLILALTKVILWLPMMIQMV. Residues 328-338 lie on the Extracellular side of the membrane; it reads VQHITGYQSFS. A helical membrane pass occupies residues 339–359; it reads FETLSFLLTLLAATVTPVFVL. Topologically, residues 360–723 are cytoplasmic; that stretch reads SEHWIHLPCG…RKREEDGNSN (364 aa). The tract at residues 451-513 is disordered; the sequence is TTDSARPGPA…ERRLSHEEGH (63 aa). Basic and acidic residues predominate over residues 501 to 513; the sequence is EGPERRLSHEEGH.

This sequence belongs to the G-protein coupled receptor 1 family. In terms of tissue distribution, specific expression in peripheral nervous system, including nerve growth factor-dependent sensory and sympathetic neurons, as well as enteric neurons.

It localises to the cell membrane. Orphan receptor. The chain is Probable G-protein coupled receptor 149 (GPR149) from Gallus gallus (Chicken).